The sequence spans 122 residues: MIKPLSYLNVADNSGARELMCIRALGGSYRESANIGDVIIAVVKDALPNMPVKRSDIVRAVIVRTRKGIRRENGMAIRFDDNAAVIINKEGNPRGTRVFGPIARELRDKNFTKIVSLAPEVL.

This sequence belongs to the universal ribosomal protein uL14 family. As to quaternary structure, part of the 50S ribosomal subunit.

The protein resides in the plastid. The protein localises to the chloroplast. In terms of biological role, binds to 23S rRNA. The polypeptide is Large ribosomal subunit protein uL14c (Chlamydomonas reinhardtii (Chlamydomonas smithii)).